Reading from the N-terminus, the 449-residue chain is NADP-specific glutamate dehydrogenase (449 aa).

Lys-125 is an active-site residue.

Belongs to the Glu/Leu/Phe/Val dehydrogenases family. As to quaternary structure, homohexamer.

It carries out the reaction L-glutamate + NADP(+) + H2O = 2-oxoglutarate + NH4(+) + NADPH + H(+). This is NADP-specific glutamate dehydrogenase from Giardia intestinalis (Giardia lamblia).